The following is a 359-amino-acid chain: Serpentine receptor class epsilon-33 (359 aa).

7 helical membrane passes run 29-49 (VIIS…VNVS), 65-85 (ILAL…FITI), 134-156 (YMYS…SVLI), 168-188 (PAIL…GLLF), 194-214 (LSAH…YVFV), 255-275 (LVFA…ALHY), and 285-305 (LIEN…MLSI).

The protein belongs to the nematode receptor-like protein sre family.

The protein resides in the membrane. The protein is Serpentine receptor class epsilon-33 (sre-33) of Caenorhabditis elegans.